A 1192-amino-acid chain; its full sequence is Probable phospholipid-transporting ATPase IM (1192 aa).

Residues 1–44 lie on the Cytoplasmic side of the membrane; sequence MFCSEKKLREVERIVKANDREYNEKFQYADNRIHTSKYNILTFL. Residues 45-66 traverse the membrane as a helical segment; it reads PINLFEQFQRVANAYFLCLLIL. Over 67 to 72 the chain is Exoplasmic loop; sequence QLIPEI. The helical transmembrane segment at 73–92 threads the bilayer; that stretch reads SSLTWFTTIVPLVLVITMTA. The Cytoplasmic segment spans residues 93–276; the sequence is VKDATDDYFR…TSIDRLMNTL (184 aa). Residues 277-298 traverse the membrane as a helical segment; that stretch reads VLWIFGFLICLGIILAIGNSIW. The Exoplasmic loop segment spans residues 299-327; it reads ESQTGDQFRTFLFWNEGEKSSVFSGFLTF. Residues 328–349 traverse the membrane as a helical segment; sequence WSYIIILNTVVPISLYVSVEVI. The Cytoplasmic segment spans residues 350-871; that stretch reads RLGHSYFINW…GRWSYFRMCK (522 aa). Asp392 acts as the 4-aspartylphosphate intermediate in catalysis. Residues Asp392, Lys393, Thr394, Glu496, Phe537, Lys560, Arg594, Thr674, Gly675, Asp676, Arg789, and Lys795 each contribute to the ATP site. Asp392 serves as a coordination point for Mg(2+). A Mg(2+)-binding site is contributed by Thr394. Asp815 is a Mg(2+) binding site. ATP contacts are provided by Asn818 and Asp819. Position 819 (Asp819) interacts with Mg(2+). A helical membrane pass occupies residues 872-892; the sequence is FLCYFFYKNFAFTLVHFWFGF. Over 893-904 the chain is Exoplasmic loop; sequence FCGFSAQTVYDQ. Residues 905-924 form a helical membrane-spanning segment; that stretch reads WFITLFNIVYTSLPVLAMGI. At 925–954 the chain is on the cytoplasmic side; sequence FDQDVSDQNSVDCPQLYKPGQLNLLFNKRK. The chain crosses the membrane as a helical span at residues 955–976; that stretch reads FFICVLHGIYTSLVLFFIPYGA. The Exoplasmic loop portion of the chain corresponds to 977-990; that stretch reads FYNVAGEDGQHIAD. The chain crosses the membrane as a helical span at residues 991–1013; sequence YQSFAVTMATSLVIVVSVQIALD. Residues 1014–1019 are Cytoplasmic-facing; sequence TSYWTF. The helical transmembrane segment at 1020–1040 threads the bilayer; the sequence is INHVFIWGSIAIYFSILFTMH. Topologically, residues 1041 to 1060 are exoplasmic loop; it reads SNGIFGIFPNQFPFVGNARH. A helical transmembrane segment spans residues 1061–1085; that stretch reads SLTQKCIWLVILLTTVASVMPVVAF. The Cytoplasmic portion of the chain corresponds to 1086-1192; the sequence is RFLKVDLYPT…SFSQDKTVKL (107 aa). The span at 1104 to 1125 shows a compositional bias: basic residues; the sequence is QKAQKKARPPSSRRPRTRRSSS. Disordered stretches follow at residues 1104–1130 and 1143–1163; these read QKAQ…RSGY and TSGK…EKTH.

This sequence belongs to the cation transport ATPase (P-type) (TC 3.A.3) family. Type IV subfamily. As to quaternary structure, component of a P4-ATPase flippase complex which consists of a catalytic alpha subunit and an accessory beta subunit. Interacts with beta subunits TMEM30A and TMEM30B. The cofactor is Mg(2+). In terms of tissue distribution, ubiquitously expressed at moderate levels.

It localises to the cell membrane. The protein localises to the golgi apparatus. The catalysed reaction is ATP + H2O + phospholipidSide 1 = ADP + phosphate + phospholipidSide 2.. Component of a P4-ATPase flippase complex which catalyzes the hydrolysis of ATP coupled to the transport of aminophospholipids from the outer to the inner leaflet of various membranes and ensures the maintenance of asymmetric distribution of phospholipids. Phospholipid translocation also seems to be implicated in vesicle formation and in uptake of lipid signaling molecules. This Homo sapiens (Human) protein is Probable phospholipid-transporting ATPase IM (ATP8B4).